The chain runs to 453 residues: Bifunctional protein GlmU (453 aa).

The pyrophosphorylase stretch occupies residues 1-231 (MERTCLAVIL…EIEMTGCNTR (231 aa)). UDP-N-acetyl-alpha-D-glucosamine is bound by residues 10–13 (LAAG), Lys-24, Gln-77, 82–83 (GT), 105–107 (YGD), Gly-143, Glu-157, Asn-172, and Asn-229. Mg(2+) is bound at residue Asp-107. Asn-229 is a Mg(2+) binding site. Residues 232-252 (AELAVIERFWQERRRHQLMLS) form a linker region. Positions 253–453 (GVTMIAPETV…ATKAAKKAKG (201 aa)) are N-acetyltransferase. Positions 318 and 336 each coordinate UDP-N-acetyl-alpha-D-glucosamine. His-348 functions as the Proton acceptor in the catalytic mechanism. Tyr-351 and Asn-362 together coordinate UDP-N-acetyl-alpha-D-glucosamine. Residues Ala-365, 371 to 372 (NY), Ser-390, Ser-408, and Arg-425 contribute to the acetyl-CoA site.

The protein in the N-terminal section; belongs to the N-acetylglucosamine-1-phosphate uridyltransferase family. It in the C-terminal section; belongs to the transferase hexapeptide repeat family. In terms of assembly, homotrimer. The cofactor is Mg(2+).

The protein localises to the cytoplasm. It carries out the reaction alpha-D-glucosamine 1-phosphate + acetyl-CoA = N-acetyl-alpha-D-glucosamine 1-phosphate + CoA + H(+). The enzyme catalyses N-acetyl-alpha-D-glucosamine 1-phosphate + UTP + H(+) = UDP-N-acetyl-alpha-D-glucosamine + diphosphate. Its pathway is nucleotide-sugar biosynthesis; UDP-N-acetyl-alpha-D-glucosamine biosynthesis; N-acetyl-alpha-D-glucosamine 1-phosphate from alpha-D-glucosamine 6-phosphate (route II): step 2/2. It functions in the pathway nucleotide-sugar biosynthesis; UDP-N-acetyl-alpha-D-glucosamine biosynthesis; UDP-N-acetyl-alpha-D-glucosamine from N-acetyl-alpha-D-glucosamine 1-phosphate: step 1/1. The protein operates within bacterial outer membrane biogenesis; LPS lipid A biosynthesis. Its function is as follows. Catalyzes the last two sequential reactions in the de novo biosynthetic pathway for UDP-N-acetylglucosamine (UDP-GlcNAc). The C-terminal domain catalyzes the transfer of acetyl group from acetyl coenzyme A to glucosamine-1-phosphate (GlcN-1-P) to produce N-acetylglucosamine-1-phosphate (GlcNAc-1-P), which is converted into UDP-GlcNAc by the transfer of uridine 5-monophosphate (from uridine 5-triphosphate), a reaction catalyzed by the N-terminal domain. The protein is Bifunctional protein GlmU of Rhizobium leguminosarum bv. trifolii (strain WSM2304).